We begin with the raw amino-acid sequence, 245 residues long: Carbohydrate deacetylase 1 (245 aa).

Mg(2+) is bound by residues H59 and H125.

Belongs to the YdjC deacetylase family. Homodimer. Mg(2+) serves as cofactor.

Its function is as follows. Probably catalyzes the deacetylation of acetylated carbohydrates an important step in the degradation of oligosaccharides. The polypeptide is Carbohydrate deacetylase 1 (Listeria innocua serovar 6a (strain ATCC BAA-680 / CLIP 11262)).